A 90-amino-acid polypeptide reads, in one-letter code: MSVKIRMHRAGAKRKPFYRIVVADSRMPRDGRFIEQVGYYNPVSQPKELKLDEDKIFEWLQKGAQPSDTVRSLLSGAGLMAKLHDAKYNK.

Belongs to the bacterial ribosomal protein bS16 family.

The polypeptide is Small ribosomal subunit protein bS16 (Lactobacillus acidophilus (strain ATCC 700396 / NCK56 / N2 / NCFM)).